Reading from the N-terminus, the 98-residue chain is Large ribosomal subunit protein uL23 (98 aa).

Belongs to the universal ribosomal protein uL23 family. In terms of assembly, part of the 50S ribosomal subunit. Contacts protein L29, and trigger factor when it is bound to the ribosome.

In terms of biological role, one of the early assembly proteins it binds 23S rRNA. One of the proteins that surrounds the polypeptide exit tunnel on the outside of the ribosome. Forms the main docking site for trigger factor binding to the ribosome. The sequence is that of Large ribosomal subunit protein uL23 from Halorhodospira halophila (strain DSM 244 / SL1) (Ectothiorhodospira halophila (strain DSM 244 / SL1)).